Reading from the N-terminus, the 263-residue chain is Methylesterase 18 (263 aa).

The active-site Acyl-ester intermediate is the Ser80. Active-site charge relay system residues include Asp212 and His240.

The protein belongs to the AB hydrolase superfamily. Methylesterase family.

The catalysed reaction is methyl (indol-3-yl)acetate + H2O = (indol-3-yl)acetate + methanol + H(+). It participates in plant hormone biosynthesis. Functionally, methylesterase shown to have methyl indole-3-acetic acid (MeIAA) esterase activity in vitro. In Arabidopsis thaliana (Mouse-ear cress), this protein is Methylesterase 18.